We begin with the raw amino-acid sequence, 553 residues long: Dihydroxy-acid dehydratase (553 aa).

Asp-78 lines the Mg(2+) pocket. Cys-119 serves as a coordination point for [2Fe-2S] cluster. Residues Asp-120 and Lys-121 each contribute to the Mg(2+) site. Residue Lys-121 is modified to N6-carboxylysine. Cys-193 lines the [2Fe-2S] cluster pocket. Glu-441 contacts Mg(2+). Catalysis depends on Ser-467, which acts as the Proton acceptor.

The protein belongs to the IlvD/Edd family. Homodimer. [2Fe-2S] cluster is required as a cofactor. It depends on Mg(2+) as a cofactor.

The catalysed reaction is (2R)-2,3-dihydroxy-3-methylbutanoate = 3-methyl-2-oxobutanoate + H2O. It carries out the reaction (2R,3R)-2,3-dihydroxy-3-methylpentanoate = (S)-3-methyl-2-oxopentanoate + H2O. Its pathway is amino-acid biosynthesis; L-isoleucine biosynthesis; L-isoleucine from 2-oxobutanoate: step 3/4. It functions in the pathway amino-acid biosynthesis; L-valine biosynthesis; L-valine from pyruvate: step 3/4. Functions in the biosynthesis of branched-chain amino acids. Catalyzes the dehydration of (2R,3R)-2,3-dihydroxy-3-methylpentanoate (2,3-dihydroxy-3-methylvalerate) into 2-oxo-3-methylpentanoate (2-oxo-3-methylvalerate) and of (2R)-2,3-dihydroxy-3-methylbutanoate (2,3-dihydroxyisovalerate) into 2-oxo-3-methylbutanoate (2-oxoisovalerate), the penultimate precursor to L-isoleucine and L-valine, respectively. The chain is Dihydroxy-acid dehydratase from Geobacter metallireducens (strain ATCC 53774 / DSM 7210 / GS-15).